Here is a 147-residue protein sequence, read N- to C-terminus: UPF0306 protein KPN78578_35330 (147 aa).

Belongs to the UPF0306 family.

This chain is UPF0306 protein KPN78578_35330, found in Klebsiella pneumoniae subsp. pneumoniae (strain ATCC 700721 / MGH 78578).